The following is an 82-amino-acid chain: Large ribosomal subunit protein bL31B (82 aa).

It belongs to the bacterial ribosomal protein bL31 family. Type B subfamily. Part of the 50S ribosomal subunit.

The protein is Large ribosomal subunit protein bL31B of Acinetobacter baylyi (strain ATCC 33305 / BD413 / ADP1).